The chain runs to 334 residues: Transcription initiation factor IIB (334 aa).

A TFIIB-type zinc finger spans residues 34-65 (TETVCPECGGRQLVHDYERAELVCQSCGLVID). Zn(2+) is bound by residues cysteine 38, cysteine 41, cysteine 57, and cysteine 60. Tandem repeats lie at residues 151 to 234 (SELD…SREL) and 245 to 326 (DYVP…ELAE).

This sequence belongs to the TFIIB family.

Functionally, stabilizes TBP binding to an archaeal box-A promoter. Also responsible for recruiting RNA polymerase II to the pre-initiation complex (DNA-TBP-TFIIB). The sequence is that of Transcription initiation factor IIB from Methanoregula boonei (strain DSM 21154 / JCM 14090 / 6A8).